The following is a 289-amino-acid chain: Phosphatidylserine decarboxylase proenzyme (289 aa).

Active-site charge relay system; for autoendoproteolytic cleavage activity residues include Asp89, His146, and Ser252. Ser252 serves as the catalytic Schiff-base intermediate with substrate; via pyruvic acid; for decarboxylase activity. At Ser252 the chain carries Pyruvic acid (Ser); by autocatalysis.

It belongs to the phosphatidylserine decarboxylase family. PSD-B subfamily. Prokaryotic type I sub-subfamily. As to quaternary structure, heterodimer of a large membrane-associated beta subunit and a small pyruvoyl-containing alpha subunit. Pyruvate serves as cofactor. In terms of processing, is synthesized initially as an inactive proenzyme. Formation of the active enzyme involves a self-maturation process in which the active site pyruvoyl group is generated from an internal serine residue via an autocatalytic post-translational modification. Two non-identical subunits are generated from the proenzyme in this reaction, and the pyruvate is formed at the N-terminus of the alpha chain, which is derived from the carboxyl end of the proenzyme. The autoendoproteolytic cleavage occurs by a canonical serine protease mechanism, in which the side chain hydroxyl group of the serine supplies its oxygen atom to form the C-terminus of the beta chain, while the remainder of the serine residue undergoes an oxidative deamination to produce ammonia and the pyruvoyl prosthetic group on the alpha chain. During this reaction, the Ser that is part of the protease active site of the proenzyme becomes the pyruvoyl prosthetic group, which constitutes an essential element of the active site of the mature decarboxylase.

The protein localises to the cell membrane. The enzyme catalyses a 1,2-diacyl-sn-glycero-3-phospho-L-serine + H(+) = a 1,2-diacyl-sn-glycero-3-phosphoethanolamine + CO2. It functions in the pathway phospholipid metabolism; phosphatidylethanolamine biosynthesis; phosphatidylethanolamine from CDP-diacylglycerol: step 2/2. Catalyzes the formation of phosphatidylethanolamine (PtdEtn) from phosphatidylserine (PtdSer). This is Phosphatidylserine decarboxylase proenzyme from Shewanella sp. (strain W3-18-1).